We begin with the raw amino-acid sequence, 211 residues long: Ribonuclease HII (211 aa).

Residues 16-205 (APVCGVDEAG…VKAALAAAAV (190 aa)) enclose the RNase H type-2 domain. Residues Asp-22, Glu-23, and Asp-114 each coordinate a divalent metal cation.

It belongs to the RNase HII family. Mn(2+) is required as a cofactor. It depends on Mg(2+) as a cofactor.

It localises to the cytoplasm. The catalysed reaction is Endonucleolytic cleavage to 5'-phosphomonoester.. Functionally, endonuclease that specifically degrades the RNA of RNA-DNA hybrids. The sequence is that of Ribonuclease HII (rnhB) from Caulobacter vibrioides (strain ATCC 19089 / CIP 103742 / CB 15) (Caulobacter crescentus).